Reading from the N-terminus, the 401-residue chain is Probable trafficking protein particle complex subunit 13 homolog (401 aa).

It belongs to the TRAPPC13 family.

In Caenorhabditis briggsae, this protein is Probable trafficking protein particle complex subunit 13 homolog.